The primary structure comprises 414 residues: 3-phosphoshikimate 1-carboxyvinyltransferase (414 aa).

Lys-20, Ser-21, and Arg-25 together coordinate 3-phosphoshikimate. Lys-20 is a binding site for phosphoenolpyruvate. Phosphoenolpyruvate is bound by residues Gly-88 and Arg-116. Residues Thr-157, Ser-158, Gln-159, Ser-183, Asp-297, and Lys-324 each coordinate 3-phosphoshikimate. Gln-159 lines the phosphoenolpyruvate pocket. Asp-297 serves as the catalytic Proton acceptor. 3 residues coordinate phosphoenolpyruvate: Arg-328, Arg-369, and Lys-395.

Belongs to the EPSP synthase family. Monomer.

Its subcellular location is the cytoplasm. The catalysed reaction is 3-phosphoshikimate + phosphoenolpyruvate = 5-O-(1-carboxyvinyl)-3-phosphoshikimate + phosphate. The protein operates within metabolic intermediate biosynthesis; chorismate biosynthesis. Its function is as follows. Catalyzes the transfer of the enolpyruvyl moiety of phosphoenolpyruvate (PEP) to the 5-hydroxyl of shikimate-3-phosphate (S3P) to produce enolpyruvyl shikimate-3-phosphate and inorganic phosphate. The protein is 3-phosphoshikimate 1-carboxyvinyltransferase of Caldivirga maquilingensis (strain ATCC 700844 / DSM 13496 / JCM 10307 / IC-167).